An 852-amino-acid chain; its full sequence is Alanine--tRNA ligase (852 aa).

The Zn(2+) site is built by His554, His558, Cys656, and His660.

It belongs to the class-II aminoacyl-tRNA synthetase family. It depends on Zn(2+) as a cofactor.

Its subcellular location is the cytoplasm. The catalysed reaction is tRNA(Ala) + L-alanine + ATP = L-alanyl-tRNA(Ala) + AMP + diphosphate. Its function is as follows. Catalyzes the attachment of alanine to tRNA(Ala) in a two-step reaction: alanine is first activated by ATP to form Ala-AMP and then transferred to the acceptor end of tRNA(Ala). Also edits incorrectly charged Ser-tRNA(Ala) and Gly-tRNA(Ala) via its editing domain. This Campylobacter concisus (strain 13826) protein is Alanine--tRNA ligase.